Here is a 68-residue protein sequence, read N- to C-terminus: uncharacterized protein (68 aa).

The signal sequence occupies residues 1–27 (MKGLLCFIYILSAILIGCVFLNKDVEA).

This is an uncharacterized protein from Invertebrate iridescent virus 6 (IIV-6).